A 410-amino-acid polypeptide reads, in one-letter code: Cytosolic isocitrate dehydrogenase [NADP] (410 aa).

Residues 77–79 (TIT) and Arg84 contribute to the NADP(+) site. Residue Thr79 participates in substrate binding. Substrate-binding positions include 96–102 (SPNGTIR), Arg111, and Arg134. Lys260 lines the NADP(+) pocket. Residues Asp275 and Asp279 each contribute to the Mn(2+) site. NADP(+) is bound by residues 310–315 (GTVTRH) and Asn328.

Belongs to the isocitrate and isopropylmalate dehydrogenases family. Mg(2+) is required as a cofactor. Requires Mn(2+) as cofactor.

It localises to the cytoplasm. Its subcellular location is the cytosol. It carries out the reaction D-threo-isocitrate + NADP(+) = 2-oxoglutarate + CO2 + NADPH. May supply 2-oxoglutarate for amino acid biosynthesis and ammonia assimilation via the glutamine synthetase/glutamate synthase (GS/GOGAT) pathway. May be involved in the production of NADPH to promote redox signaling or homeostasis in response to oxidative stress, or redox signaling linked to defense responses. The chain is Cytosolic isocitrate dehydrogenase [NADP] from Arabidopsis thaliana (Mouse-ear cress).